Consider the following 419-residue polypeptide: Mitochondrial inner membrane magnesium transporter MRS2 (419 aa).

Transmembrane regions (helical) follow at residues 297-317 and 328-348; these read VTIV…YGMN and GMVL…WFNL. The short motif at 314-317 is the YGMN element; the sequence is YGMN.

It belongs to the CorA metal ion transporter (MIT) (TC 1.A.35) family. Homopentamer. Forms homooligomers. Interacts with MFM1.

It is found in the mitochondrion inner membrane. Its function is as follows. High-conductance magnesium-selective channel that mediates the influx of magnesium into the mitochondrial matrix. Essential for the splicing of mRNA group II introns in mitochondria by affecting mitochondrial magnesium concentrations, which are critical for group II intron splicing. It also suppresses a variety of mitochondrial intron mutations and its absence may disturb the assembly of mitochondrial membrane complexes. This is Mitochondrial inner membrane magnesium transporter MRS2 (MRS2) from Yarrowia lipolytica (strain CLIB 122 / E 150) (Yeast).